Here is a 328-residue protein sequence, read N- to C-terminus: COP9 signalosome complex subunit 6 (328 aa).

The MPN domain maps to 42-175 (VALHPLVILN…VSVFESVIDI (134 aa)).

This sequence belongs to the peptidase M67A family. CSN6 subfamily. In terms of assembly, component of the CSN complex, composed of COPS1/GPS1, COPS2, COPS3, COPS4, COPS5, COPS6, COPS7 (COPS7A or COPS7B), COPS8 and COPS9. In the complex, it probably interacts directly with COPS2, COPS4, COPS5, COPS7 (COPS7A or COPS7B) and COPS9. Interacts with the translation initiation factor EIF3S6. Interacts weakly with RBX1. Directly interacts with COP1 and 14-3-3 protein sigma/SFN. Interacts with ERCC6.

The protein localises to the cytoplasm. It localises to the nucleus. Its function is as follows. Component of the COP9 signalosome complex (CSN), a complex involved in various cellular and developmental processes. The CSN complex is an essential regulator of the ubiquitin (Ubl) conjugation pathway by mediating the deneddylation of the cullin subunits of SCF-type E3 ligase complexes, leading to decrease the Ubl ligase activity of SCF-type complexes such as SCF, CSA or DDB2. The complex is also involved in phosphorylation of p53/TP53, c-jun/JUN, IkappaBalpha/NFKBIA, ITPK1 and IRF8, possibly via its association with CK2 and PKD kinases. CSN-dependent phosphorylation of TP53 and JUN promotes and protects degradation by the Ubl system, respectively. Has some glucocorticoid receptor-responsive activity. Stabilizes COP1 through reducing COP1 auto-ubiquitination and decelerating COP1 turnover rate, hence regulates the ubiquitination of COP1 targets, including SFN. This Pongo abelii (Sumatran orangutan) protein is COP9 signalosome complex subunit 6 (COPS6).